The sequence spans 279 residues: Probable diacylglycerol pyrophosphate phosphatase 1 (279 aa).

At 1–17 (MEAVGKHVKLFWNVYSD) the chain is on the lumenal side. The helical transmembrane segment at 18–38 (YAVLIAISLSYFVFDVLMLPF) threads the bilayer. Residues 39-58 (TRQFSLEDITISHPFALHEQ) are Cytoplasmic-facing. The chain crosses the membrane as a helical span at residues 59–79 (VPTKYLGIICVFFPALVLYGF). Over 80-86 (GKLRNNS) the chain is Lumenal. The helical transmembrane segment at 87-107 (LLFWKSLMGLLYSTMVCGLCV) threads the bilayer. The Cytoplasmic segment spans residues 108–163 (SLLKNAVGRPRPDFLARCQPFESTPKTGLVDVLSCSVPWSDKVLQDGFRSFPSGHT). Positions 111–119 (KNAVGRPRP) are phosphatase sequence motif I. The tract at residues 159–162 (PSGH) is phosphatase sequence motif II. The chain crosses the membrane as a helical span at residues 164-184 (SFSFAGLGFLAIFLAGQLKMF). Topologically, residues 185–187 (RNK) are lumenal. Residues 188 to 208 (TSSWKVVVPLVPLSIASWIGL) form a helical membrane-spanning segment. Over 209 to 220 (SRSQDYRHHKED) the chain is Cytoplasmic. The phosphatase sequence motif III stretch occupies residues 209–220 (SRSQDYRHHKED). Residues 221 to 241 (IAVGALFGFAIAYVVYRQLFP) form a helical membrane-spanning segment. Residues 242-279 (PLDHHNADILYVQAELDEGYTNVHSAGNSSATNAEQMV) lie on the Lumenal side of the membrane.

The protein belongs to the PA-phosphatase related phosphoesterase family.

The protein resides in the vacuole membrane. It localises to the endoplasmic reticulum membrane. The enzyme catalyses a 1,2-diacyl-sn-glycerol 3-diphosphate + H2O = a 1,2-diacyl-sn-glycero-3-phosphate + phosphate + H(+). It catalyses the reaction a 1,2-diacyl-sn-glycero-3-phosphate + H2O = a 1,2-diacyl-sn-glycerol + phosphate. Its function is as follows. Catalyzes the dephosphorylation of diacylglycerol phosphate (DGPP) to phosphatidate (PA) and the subsequent dephosphorylation of PA to diacylglycerol (DAG). The sequence is that of Probable diacylglycerol pyrophosphate phosphatase 1 (dpp1) from Schizosaccharomyces pombe (strain 972 / ATCC 24843) (Fission yeast).